A 1311-amino-acid polypeptide reads, in one-letter code: Zinc finger protein 521 (1311 aa).

Over residues 1-10 the composition is skewed to basic residues; that stretch reads MSRRKQAKPR. Residues 1–37 form a disordered region; the sequence is MSRRKQAKPRSLKDPNCKLEDKTEDGEALDCKKRPED. Basic and acidic residues predominate over residues 11-21; the sequence is SLKDPNCKLED. A C2H2-type 1; degenerate zinc finger spans residues 47–67; the sequence is HSCDSCLQVFESLSDITEHKI. Residues 81–108 form a disordered region; the sequence is DPTCSWPASSPSSKDQTSPSHGEGCDFG. Residues 87-102 are compositionally biased toward low complexity; it reads PASSPSSKDQTSPSHG. 7 consecutive C2H2-type zinc fingers follow at residues 118–140, 146–168, 174–196, 202–224, 246–269, 281–304, and 310–332; these read YPCQ…EQSH, FKCT…IKLH, YHCS…LKTH, YKCA…MQVH, QKCS…AECH, LQCV…EQVH, and NSCS…MDSH. A compositionally biased stretch (low complexity) spans 349–358; it reads VGYTSVSSTT. The tract at residues 349–397 is disordered; sequence VGYTSVSSTTPDSNLSVDSSTMVEAAPPIPKSRGRKRAAQQTPDMTGPS. Composition is skewed to polar residues over residues 359–370 and 387–397; these read PDSNLSVDSSTM and AQQTPDMTGPS. Residues 405–429 form a C2H2-type 9; degenerate zinc finger; it reads YSCIYCNKQLFSSLAVLQIHLKTMH. 3 consecutive C2H2-type zinc fingers follow at residues 437–460, 477–500, and 513–536; these read HICQ…KQVH, YQCN…RCSH, and FFCP…RQVH. Serine 546 bears the Phosphoserine mark. The segment at 560–585 adopts a C2H2-type 13; atypical zinc-finger fold; it reads YSCSYCTNSPIFNSVLKLNKHIKENH. 2 positions are modified to phosphoserine: serine 605 and serine 608. 7 C2H2-type zinc fingers span residues 634 to 656, 664 to 686, 694 to 717, 722 to 745, 752 to 775, 783 to 805, and 809 to 832; these read YICN…LKTH, LTCP…VTIH, YICE…LDMH, FRCT…AVKH, YRCT…KHNH, HKCI…ITTH, and YNCK…REKH. The disordered stretch occupies residues 863–882; that stretch reads TNSQESHNSHDGSEEDVDTS. Residues 886-908 form a C2H2-type 21; degenerate zinc finger; sequence YGCDICGAAYTMETLLQNHQLRD. C2H2-type zinc fingers lie at residues 930-952, 959-981, and 1020-1042; these read YKCN…MQTH, YMCP…KVTH, and FRCV…GTFH. A C2H2-type 25; degenerate zinc finger spans residues 1065-1083; it reads YKCASCLKEFRSKQDLVKL. Residues 1138 to 1161 form a C2H2-type 26 zinc finger; sequence TRCSSCNVKFESESELQNHIQTIH. Lysine 1146 participates in a covalent cross-link: Glycyl lysine isopeptide (Lys-Gly) (interchain with G-Cter in SUMO2). Polar residues predominate over residues 1168-1178; it reads SNSTQLKTPQV. The segment at 1168 to 1188 is disordered; the sequence is SNSTQLKTPQVSPMPRISPSQ. 4 consecutive C2H2-type zinc fingers follow at residues 1195–1217, 1225–1247, 1256–1279, and 1286–1309; these read YQCI…VANH, HECK…LIEH, FKCP…FSAH, and YDCT…MTQH.

This sequence belongs to the krueppel C2H2-type zinc-finger protein family. As to quaternary structure, interacts with EBF1. Interacts with SMAD1 and SMAD4. In terms of tissue distribution, predominantly expressed in hematopoietic cells. Present in organs and tissues that contain stem and progenitor cells, myeloid and/or lymphoid: placenta, spleen, lymph nodes, thymus, bone marrow and fetal liver. Within the hematopoietic system, it is abundant in CD34(+) cells but undetectable in mature peripheral blood leukocytes, and its levels rapidly decrease during the differentiation of CD34(+) cells in response to hemopoietins.

Its subcellular location is the nucleus. Its function is as follows. Transcription factor that can both act as an activator or a repressor depending on the context. Involved in BMP signaling and in the regulation of the immature compartment of the hematopoietic system. Associates with SMADs in response to BMP2 leading to activate transcription of BMP target genes. Acts as a transcriptional repressor via its interaction with EBF1, a transcription factor involved specification of B-cell lineage; this interaction preventing EBF1 to bind DNA and activate target genes. This Homo sapiens (Human) protein is Zinc finger protein 521 (ZNF521).